The chain runs to 590 residues: Aspartate--tRNA ligase (590 aa).

Residue E172 coordinates L-aspartate. The segment at 196-199 (QLFK) is aspartate. An L-aspartate-binding site is contributed by R218. Residues 218–220 (RDE) and Q227 contribute to the ATP site. Residue H449 coordinates L-aspartate. Residue E483 coordinates ATP. Residue R490 participates in L-aspartate binding. ATP is bound at residue 535–538 (GLDR).

Belongs to the class-II aminoacyl-tRNA synthetase family. Type 1 subfamily. In terms of assembly, homodimer.

It is found in the cytoplasm. The catalysed reaction is tRNA(Asp) + L-aspartate + ATP = L-aspartyl-tRNA(Asp) + AMP + diphosphate. Its function is as follows. Catalyzes the attachment of L-aspartate to tRNA(Asp) in a two-step reaction: L-aspartate is first activated by ATP to form Asp-AMP and then transferred to the acceptor end of tRNA(Asp). The sequence is that of Aspartate--tRNA ligase from Glaesserella parasuis serovar 5 (strain SH0165) (Haemophilus parasuis).